The following is an 82-amino-acid chain: RNA-binding protein Hfq (82 aa).

The Sm domain occupies 9-68; the sequence is DPYLNTLRKERVPVSIYLVNGIKLQGQIESFDQFVILLKNTVSQMVYKHAISTVVPSRPV.

Belongs to the Hfq family. Homohexamer.

In terms of biological role, RNA chaperone that binds small regulatory RNA (sRNAs) and mRNAs to facilitate mRNA translational regulation in response to envelope stress, environmental stress and changes in metabolite concentrations. Also binds with high specificity to tRNAs. The sequence is that of RNA-binding protein Hfq from Pseudomonas aeruginosa (strain LESB58).